A 201-amino-acid polypeptide reads, in one-letter code: Peroxiredoxin prdx-2 (201 aa).

Positions 10-168 (AFIGKPAPQF…TLRLVQAFQF (159 aa)) constitute a Thioredoxin domain. Cys55 serves as the catalytic Cysteine sulfenic acid (-SOH) intermediate.

Belongs to the peroxiredoxin family. AhpC/Prx1 subfamily. As to quaternary structure, monomer and homodimer; disulfide-linked. Under nonstress conditions, present in the reduced monomeric form. Forms active hyperoxidized monomers and disulfide-linked homodimers upon oxidation by hydrogen peroxide. Forms active oxidized homodimers in response to the drug metformin. In terms of processing, the enzyme can be inactivated by further oxidation of the cysteine sulfenic acid (C(P)-SOH) to sulphinic acid (C(P)-SO2H) instead of its condensation to a disulfide bond. Expressed in the gonad, neurons and intestine (at protein level). Expressed in the pharyngeal inter-neuron I4 and the sensory interneuron I2. Expressed in the intestine, pharyngeal muscle 1, vulval muscle, body wall muscle, epithelial cells e1 and e3, and neurons in the head and tail.

The protein resides in the cytoplasm. It carries out the reaction a hydroperoxide + [thioredoxin]-dithiol = an alcohol + [thioredoxin]-disulfide + H2O. With respect to regulation, activated following oxidation of the conserved redox-active cysteine residue, which subsequently allows for the oxidation and activation of substrates. Thiol-specific peroxidase that catalyzes the reduction of hydrogen peroxide and organic hydroperoxides to water and alcohols, respectively. In I2 pharyngeal neurons, required for the inhibition of feeding in response to light and hydrogen peroxide. In the intestine, plays a role in protecting cells against oxidative stress by detoxifying peroxides such as hydrogen peroxide. In addition, plays a role in the recovery from oxidative stress induced by hydrogen peroxide. In its hyperoxidized form (induced by hydrogen peroxide), confers protection against heat stress. However, has a low tendency for overoxidation during the normal lifespan. Increases sensitivity to cytotoxicity caused by metalloids and heavy metals such as arsenic and cadmium by playing a role in inhibiting the expression of phase II detoxification genes such as gcs-1 in intestinal cells. In addition, in response to arsenite, promotes the secretion of the insulin ligand daf-28 into the pseudocoelom, which negatively regulates the activities of daf-16 and skn-1. Plays a role in promoting longevity. Plays a role in the mitohormetic pathway by promoting the activation of pmk-1 in response to the drug metformin. The polypeptide is Peroxiredoxin prdx-2 (Caenorhabditis elegans).